Consider the following 317-residue polypeptide: Secreted frizzled-related protein 5 (317 aa).

A signal peptide spans M1–C29. An FZ domain is found at S48–V165. Disulfide bonds link C53/C116, C63/C109, C100/C135, C124/C162, C128/C152, C181/C253, C184/C255, and C198/C303. The NTR domain occupies C181–C303.

This sequence belongs to the secreted frizzled-related protein (sFRP) family. Highly expressed in the retinal pigment epithelium (RPE) and pancreas. Weak expression in heart, liver and muscle.

The protein resides in the secreted. Soluble frizzled-related proteins (sFRPS) function as modulators of Wnt signaling through direct interaction with Wnts. They have a role in regulating cell growth and differentiation in specific cell types. SFRP5 may be involved in determining the polarity of photoreceptor, and perhaps, other cells in the retina. This chain is Secreted frizzled-related protein 5 (SFRP5), found in Homo sapiens (Human).